The following is a 564-amino-acid chain: Centrosomal protein kizuna (564 aa).

Residues 1 to 21 form a disordered region; sequence MSEAGRAAAGPCPEVSPSRSQ. A coiled-coil region spans residues 28–50; that stretch reads RCLRDSETRRLELERKLMEYKSS. 5 disordered regions span residues 178–201, 304–345, 442–465, 487–519, and 531–564; these read QPAA…PTQA, TGPQ…EDEP, ECGD…PNDS, IGNN…RPEF, and AFWG…DFYD. Low complexity predominate over residues 313–324; it reads QQAASQDSSSSS. Polar residues predominate over residues 447–463; it reads SSVQSNESSYSLPSIPN. Positions 493–519 are enriched in basic and acidic residues; that stretch reads EAKESQEMCSERSSSSERSGDLSRPEF.

The protein belongs to the kizuna family.

It localises to the cytoplasm. It is found in the cytoskeleton. The protein localises to the microtubule organizing center. Its subcellular location is the centrosome. The protein resides in the cilium basal body. Centrosomal protein required for establishing a robust mitotic centrosome architecture that can endure the forces that converge on the centrosomes during spindle formation. Required for stabilizing the expanded pericentriolar material around the centriole. The polypeptide is Centrosomal protein kizuna (KIZ) (Gallus gallus (Chicken)).